A 291-amino-acid chain; its full sequence is MAATRALPAGLGELEVLAVGTVLLMEALSGISLNGLTIFSFCKTPDLRTPSNLLVLSLALADTGISLNALVAAVSSLLRRWPHGSEGCQVHGFQGFATALASICGSAAVAWGRYHHYCTRRQLAWDTAIPLVLFVWMSSAFWASLPLMGWGHYDYEPVGTCCTLDYSRGDRNFISFLFTMAFFNFLVPLFITHTSYRFMEQKFSRSGHLPVNTTLPGRMLLLGWGPYALLYLYAAIADVSFISPKLQMVPALIAKTMPTINAINYALHREMVCRGTWQCLSPQKSKKDRTQ.

The Extracellular segment spans residues methionine 1 to glutamate 15. A helical membrane pass occupies residues valine 16–leucine 36. The Cytoplasmic segment spans residues threonine 37–asparagine 52. The chain crosses the membrane as a helical span at residues leucine 53–alanine 73. Topologically, residues valine 74–histidine 91 are extracellular. Residues cysteine 88 and cysteine 162 are joined by a disulfide bond. A helical membrane pass occupies residues glycine 92–glycine 112. The Cytoplasmic portion of the chain corresponds to arginine 113–proline 130. A helical membrane pass occupies residues leucine 131–glycine 151. The Extracellular portion of the chain corresponds to histidine 152 to serine 175. Residues phenylalanine 176–tyrosine 196 form a helical membrane-spanning segment. Over arginine 197–methionine 219 the chain is Cytoplasmic. The chain crosses the membrane as a helical span at residues leucine 220 to serine 240. Over phenylalanine 241 to glutamine 247 the chain is Extracellular. Residues methionine 248–histidine 268 traverse the membrane as a helical segment. The residue at position 255 (lysine 255) is an N6-(retinylidene)lysine. Residues arginine 269–glutamine 291 are Cytoplasmic-facing.

This sequence belongs to the G-protein coupled receptor 1 family. Opsin subfamily. Post-translationally, covalently binds all-trans- and 11-cis-retinal.

Its subcellular location is the membrane. Functionally, receptor for all-trans- and 11-cis-retinal. Binds preferentially to the former and may catalyze the isomerization of the chromophore by a retinochrome-like mechanism. The sequence is that of RPE-retinal G protein-coupled receptor (Rgr) from Mus musculus (Mouse).